The sequence spans 334 residues: GTP 3',8-cyclase (334 aa).

One can recognise a Radical SAM core domain in the interval 11–236 (GFNRKIDYLR…ESTESSQGPA (226 aa)). Residue Arg-20 coordinates GTP. [4Fe-4S] cluster contacts are provided by Cys-27 and Cys-31. An S-adenosyl-L-methionine-binding site is contributed by Tyr-33. Residue Cys-34 coordinates [4Fe-4S] cluster. Arg-69 lines the GTP pocket. An S-adenosyl-L-methionine-binding site is contributed by Gly-73. Thr-100 contacts GTP. Ser-124 is a binding site for S-adenosyl-L-methionine. Lys-161 contributes to the GTP binding site. Met-195 provides a ligand contact to S-adenosyl-L-methionine. Residues Cys-260 and Cys-263 each contribute to the [4Fe-4S] cluster site. 265–267 (RVR) contacts GTP. Position 277 (Cys-277) interacts with [4Fe-4S] cluster.

The protein belongs to the radical SAM superfamily. MoaA family. As to quaternary structure, monomer and homodimer. [4Fe-4S] cluster is required as a cofactor.

It carries out the reaction GTP + AH2 + S-adenosyl-L-methionine = (8S)-3',8-cyclo-7,8-dihydroguanosine 5'-triphosphate + 5'-deoxyadenosine + L-methionine + A + H(+). Its pathway is cofactor biosynthesis; molybdopterin biosynthesis. Functionally, catalyzes the cyclization of GTP to (8S)-3',8-cyclo-7,8-dihydroguanosine 5'-triphosphate. The sequence is that of GTP 3',8-cyclase from Pseudomonas putida (strain GB-1).